Reading from the N-terminus, the 238-residue chain is ATP synthase subunit a (238 aa).

5 consecutive transmembrane segments (helical) span residues 17–37 (LSDMLMITITCLIVFIIAVAA), 75–95 (FLTLGVTLIMYVFVANMLGLP), 112–132 (DATVTLTLAVMVVALTHYYGV), 179–199 (ILLGLLASLGTHYGVLGAVGA), and 202–222 (FPIMVWQAFSIFVGTIQAFIF).

Belongs to the ATPase A chain family. F-type ATPases have 2 components, CF(1) - the catalytic core - and CF(0) - the membrane proton channel. CF(1) has five subunits: alpha(3), beta(3), gamma(1), delta(1), epsilon(1). CF(0) has three main subunits: a(1), b(2) and c(9-12). The alpha and beta chains form an alternating ring which encloses part of the gamma chain. CF(1) is attached to CF(0) by a central stalk formed by the gamma and epsilon chains, while a peripheral stalk is formed by the delta and b chains.

The protein resides in the cell membrane. Its function is as follows. Key component of the proton channel; it plays a direct role in the translocation of protons across the membrane. This chain is ATP synthase subunit a, found in Bacillus sp. (strain PS3).